Here is a 250-residue protein sequence, read N- to C-terminus: rRNA methyltransferase 2, mitochondrial (250 aa).

The N-terminal 35 residues, 1 to 35, are a transit peptide targeting the mitochondrion; sequence MRLVFTGNCVFKRLLHTEIGGKYAKQQPRNLKGRS. Residues 90–93, aspartate 119, 136–137, and aspartate 161 contribute to the S-adenosyl-L-methionine site; these read PGSW and DF. Lysine 201 acts as the Proton acceptor in catalysis.

It belongs to the class I-like SAM-binding methyltransferase superfamily. RNA methyltransferase RlmE family.

It is found in the mitochondrion. The catalysed reaction is a uridine in rRNA + S-adenosyl-L-methionine = a 2'-O-methyluridine in rRNA + S-adenosyl-L-homocysteine + H(+). S-adenosyl-L-methionine-dependent 2'-O-ribose methyltransferase that catalyzes the formation of 2'-O-methyluridine at position 1579 (Um1579) in the mitochondrial large subunit ribosomal RNA (mtLSU rRNA), a universally conserved modification in the peptidyl transferase domain of the mtLSU rRNA. This activity may require prior 2'-O-methylguanosine modification at position 1580 (Gm1580) by MRM3. Essential for late-stage assembly of mtLSU required for efficient translation of mitochondrial DNA encoded proteins; methyltransferase activity is not required for this function. Essential for mitochondrial respiratory function. This chain is rRNA methyltransferase 2, mitochondrial, found in Drosophila melanogaster (Fruit fly).